A 1006-amino-acid chain; its full sequence is DNA polymerase (1006 aa).

Belongs to the DNA polymerase type-B family. Interacts with OPG148. Component of the Uracil-DNA glycosylase(UDG)-OPG148-polymerase complex; OPG148 and OPG116/UDG form a heterodimeric processivity factor that associates with OPG071 to form the processive polymerase holoenzyme.

It catalyses the reaction DNA(n) + a 2'-deoxyribonucleoside 5'-triphosphate = DNA(n+1) + diphosphate. Functionally, catalyzes DNA synthesis. Acquires processivity by associating with a heterodimeric processivity factor comprised of the viral OPG148 and OPG116 proteins, thereby forming the DNA polymerase holoenzyme. Displays 3'- to 5' exonuclease activity. Might participate in viral DNA recombination. Does not perform OPG116/D4synthesis across an abasic site. This chain is DNA polymerase (OPG071), found in Homo sapiens (Human).